A 354-amino-acid chain; its full sequence is S-adenosylmethionine:tRNA ribosyltransferase-isomerase (354 aa).

It belongs to the QueA family. In terms of assembly, monomer.

Its subcellular location is the cytoplasm. It catalyses the reaction 7-aminomethyl-7-carbaguanosine(34) in tRNA + S-adenosyl-L-methionine = epoxyqueuosine(34) in tRNA + adenine + L-methionine + 2 H(+). It functions in the pathway tRNA modification; tRNA-queuosine biosynthesis. Transfers and isomerizes the ribose moiety from AdoMet to the 7-aminomethyl group of 7-deazaguanine (preQ1-tRNA) to give epoxyqueuosine (oQ-tRNA). This is S-adenosylmethionine:tRNA ribosyltransferase-isomerase from Salmonella gallinarum (strain 287/91 / NCTC 13346).